Reading from the N-terminus, the 554-residue chain is (Z)-gamma-bisabolene synthase 2 (554 aa).

The Mg(2+) site is built by D306, D310, D450, and D458. The DDXXD motif signature appears at 306–310 (DDACD).

It belongs to the terpene synthase family. Tpsa subfamily. It depends on Mg(2+) as a cofactor. Requires Mn(2+) as cofactor. Predominantly expressed in roots. Expressed in the cortex and the sub-epidermal layers of roots. Also detected in leaf hydathodes and flower stigmata.

The protein resides in the cytoplasm. The catalysed reaction is (2E,6E)-farnesyl diphosphate = (Z)-gamma-bisabolene + diphosphate. It functions in the pathway secondary metabolite biosynthesis; terpenoid biosynthesis. Involved in sesquiterpene (C15) biosynthesis. The major product is (Z)-gamma-bisabolene with minor amounts of (E)-nerolidol and alpha-bisabolol. The polypeptide is (Z)-gamma-bisabolene synthase 2 (TPS13) (Arabidopsis thaliana (Mouse-ear cress)).